The chain runs to 1968 residues: Signal element on autosome protein 2 (1968 aa).

Low complexity predominate over residues 72-88; sequence TSSSFSSSLATTTTTSS. Disordered stretches follow at residues 72–252 and 271–364; these read TSSS…TPTQ and QVQQ…VQEQ. The span at 107-119 shows a compositional bias: basic residues; that stretch reads SHHHPSSSHHHHP. Low complexity-rich tracts occupy residues 120 to 134, 144 to 165, 219 to 232, and 298 to 338; these read GQQQ…SHLQ, HPYY…YGQA, DQPS…LPPL, and LSSI…SSSS. Polar residues predominate over residues 346 to 362; that stretch reads PNASSSSLIKRQSQDVQ. Residues 413 to 440 form a C2H2-type 1 zinc finger; sequence YQCPNCNRNLANARNLQRHRQTCGSAQH. 2 disordered regions span residues 451–499 and 538–601; these read RSPP…LYSP and WSRD…TLDP. The segment covering 452–467 has biased composition (pro residues); it reads SPPPCASAPPVAPPTA. Residues 472-482 are compositionally biased toward polar residues; sequence FQHHNSTGNLT. Low complexity predominate over residues 483–498; it reads LSYSSSSSRHQSSLYS. Over residues 570–594 the composition is skewed to basic and acidic residues; that stretch reads PLHHLDSFDSADHRKETPRECHEPD. A C2H2-type 2; degenerate zinc finger spans residues 651–672; the sequence is FTCEACKKSVSSERSLRRHYNT. Disordered stretches follow at residues 681–712 and 785–854; these read AASG…GPEK and VTSA…TGNP. Residues 690–702 show a composition bias toward basic residues; sequence TTKRKPATKRPSK. Residues 794-804 are compositionally biased toward low complexity; that stretch reads HQLPHQQPQQQ. Over residues 812 to 824 the composition is skewed to acidic residues; the sequence is LLNEQDESADDDG. Low complexity predominate over residues 827 to 851; sequence RSSSGTVSNSTTTTTTATTTSSKST. The C2H2-type 3; degenerate zinc finger occupies 856–875; it reads FTCEHCARQLCSMSNLKRHR. Disordered regions lie at residues 882–905, 975–1069, 1083–1227, and 1246–1273; these read ASSS…TAPA, GDAL…EHKN, RMDA…SPLD, and PGPL…SQQA. Composition is skewed to low complexity over residues 981 to 1015, 1023 to 1046, and 1108 to 1131; these read QQHQ…AGRI, ILNQ…MLNP, and PQRS…YQVQ. The segment covering 1136–1146 has biased composition (pro residues); the sequence is PLPPMQLPPLQ. Positions 1147–1185 are enriched in low complexity; sequence NPHNQQQQHQMLHQSQMNYQQVQQVQQVQHVQQQQNLQN. Polar residues-rich tracts occupy residues 1201–1211 and 1251–1273; these read APGNRSRSHSN and QGQS…SQQA. Residues 1274 to 1297 form a C2H2-type 4 zinc finger; that stretch reads YICPECKKTYASRKNVKRHRMAVH. Disordered stretches follow at residues 1333-1478, 1569-1608, 1624-1671, and 1769-1822; these read TPDS…ADEE, SVGL…QQQQ, HPPM…LTCS, and ADRQ…PSTN. Basic and acidic residues predominate over residues 1388-1403; that stretch reads ERQEPPKKPVADDHKS. 2 stretches are compositionally biased toward pro residues: residues 1407 to 1421 and 1429 to 1445; these read PLPP…PPPY and LNPP…PPLQ. Residues 1589–1608 show a composition bias toward low complexity; sequence QHPQQHPQQHPQQHPQQQQQ. Over residues 1624–1633 the composition is skewed to polar residues; that stretch reads HPPMPVSQQF. The segment at 1668-1694 adopts a C2H2-type 5; degenerate zinc-finger fold; sequence LTCSGCKKILGSDYSLRRHRAGCADVQ. Positions 1800–1811 are enriched in low complexity; that stretch reads SSSSSSSTSSAS. The segment at 1826-1858 adopts a C2H2-type 6 zinc-finger fold; the sequence is HYCQFPECGKNFSSEWNLARHTRESCKMTTRAH.

Expressed in seam cells, intestine cells, pharyngeal muscles and nerve ring neurons.

The protein localises to the nucleus. Its subcellular location is the cytoplasm. Its function is as follows. RNA-binding protein, which regulates the expression of proteins required to control developmental timing of events during the L2 to L3 larval stage switch. Binds to the 3'UTR of the transcript of the heterochronic protein lin-28 to post-transcriptionally negatively regulate its expression in certain tissue types in the later larval stages. During larval development, controls the timing of seam cell division and terminal differentiation into adult alae. In vitro, it can also bind to DNA through its first zinc finger. May bind directly or indirectly to the promoter of the sex-determining factor xol-1 to activate its transcription. Its activation of xol-1 transcription controls sex determination and X chromosome dosage compensation to promote male development. Through the negative regulation of lin-28 transcript, it also has a role in the fox-1-sex-1-mediated determination of sexual fate. Acts in the intestine to play a role in regulating adult lifespan. This chain is Signal element on autosome protein 2, found in Caenorhabditis elegans.